The primary structure comprises 284 residues: Nucleotide-binding protein VSAL_I0495 (284 aa).

8–15 (GNSGAGKS) is an ATP binding site. Position 56 to 59 (56 to 59 (DIRN)) interacts with GTP.

The protein belongs to the RapZ-like family.

Displays ATPase and GTPase activities. The protein is Nucleotide-binding protein VSAL_I0495 of Aliivibrio salmonicida (strain LFI1238) (Vibrio salmonicida (strain LFI1238)).